The sequence spans 115 residues: Probable 4-amino-4-deoxy-L-arabinose-phosphoundecaprenol flippase subunit ArnE (115 aa).

A run of 3 helical transmembrane segments spans residues 42–62 (PWPW…LLLL), 65–85 (VEVG…TLAA), and 93–112 (VDRR…VLLG). Residues 46-113 (LALLALGLGL…IVAGVVLLGR (68 aa)) enclose the EamA domain.

It belongs to the ArnE family. Heterodimer of ArnE and ArnF.

It is found in the cell inner membrane. It participates in bacterial outer membrane biogenesis; lipopolysaccharide biosynthesis. In terms of biological role, translocates 4-amino-4-deoxy-L-arabinose-phosphoundecaprenol (alpha-L-Ara4N-phosphoundecaprenol) from the cytoplasmic to the periplasmic side of the inner membrane. The sequence is that of Probable 4-amino-4-deoxy-L-arabinose-phosphoundecaprenol flippase subunit ArnE from Pseudomonas aeruginosa (strain UCBPP-PA14).